The chain runs to 282 residues: 2-dehydro-3-deoxyphosphooctonate aldolase (282 aa).

The protein belongs to the KdsA family.

Its subcellular location is the cytoplasm. The catalysed reaction is D-arabinose 5-phosphate + phosphoenolpyruvate + H2O = 3-deoxy-alpha-D-manno-2-octulosonate-8-phosphate + phosphate. Its pathway is carbohydrate biosynthesis; 3-deoxy-D-manno-octulosonate biosynthesis; 3-deoxy-D-manno-octulosonate from D-ribulose 5-phosphate: step 2/3. It functions in the pathway bacterial outer membrane biogenesis; lipopolysaccharide biosynthesis. The chain is 2-dehydro-3-deoxyphosphooctonate aldolase from Shewanella halifaxensis (strain HAW-EB4).